Here is a 162-residue protein sequence, read N- to C-terminus: MRLVEIGRFGAPYALKGGLRFRGEPVVLHLERVYVEGHGWRAIEDLYRVGEELVVHLAGVTDRTLAEALVGLRVYAEVADLPPLEEGRYYYFALIGLPVYVEGRQVGEVVDILDAGAQDVLIIRGVGERLRDRAERLVPLQAPYVRVEEGSIHVDPIPGLFD.

The region spanning 86–160 is the PRC barrel domain; that stretch reads EGRYYYFALI…SIHVDPIPGL (75 aa).

It belongs to the RimM family. Binds ribosomal protein uS19.

The protein resides in the cytoplasm. Functionally, an accessory protein needed during the final step in the assembly of 30S ribosomal subunit, possibly for assembly of the head region. Essential for efficient processing of 16S rRNA. May be needed both before and after RbfA during the maturation of 16S rRNA. It has affinity for free ribosomal 30S subunits but not for 70S ribosomes. This is Ribosome maturation factor RimM from Thermus thermophilus (strain ATCC 27634 / DSM 579 / HB8).